A 118-amino-acid polypeptide reads, in one-letter code: Large ribosomal subunit protein uL18 (118 aa).

This sequence belongs to the universal ribosomal protein uL18 family. Part of the 50S ribosomal subunit; part of the 5S rRNA/L5/L18/L25 subcomplex. Contacts the 5S and 23S rRNAs.

Its function is as follows. This is one of the proteins that bind and probably mediate the attachment of the 5S RNA into the large ribosomal subunit, where it forms part of the central protuberance. This Rickettsia prowazekii (strain Madrid E) protein is Large ribosomal subunit protein uL18.